The sequence spans 85 residues: Turmerin (85 aa).

The N-terminus is blocked.

In terms of biological role, inhibition of trypsin. Has anticarcinogenic activity, prevents transformation of DMBA-treated JB6 cells. Has antipromoter activity, prevents promotion by tetradecanoyl phorbal acetate (TPA) in JB6 cells. Prevents tertiary butyl hydroperoxide-induced mutagenesis. Protects AT base pairs and shows antimutagenesis activity in TA102 and TA104 S.typhimurium mutagenesis tests. Inhibits paw edema formation induced by phospholipase A2 in Swiss Wistar mice. Prevents the release of arachidonate, the parent compound for the synthesis of prostaglandins and prostacyclins. Has antimalarial activity, kills P.falciparum. Has antivenom activity, nullifies the lethal effects of N.naja venom and inhibits phospholipase A2 present in N.naja venom. Has antifungal activity, inhibits cilia formation by A.niger. Is not toxic or allergenic. This Curcuma longa (Turmeric) protein is Turmerin.